A 469-amino-acid chain; its full sequence is 3-isopropylmalate dehydratase large subunit (469 aa).

Residues Cys350, Cys410, and Cys413 each coordinate [4Fe-4S] cluster.

The protein belongs to the aconitase/IPM isomerase family. LeuC type 1 subfamily. As to quaternary structure, heterodimer of LeuC and LeuD. Requires [4Fe-4S] cluster as cofactor.

It catalyses the reaction (2R,3S)-3-isopropylmalate = (2S)-2-isopropylmalate. It participates in amino-acid biosynthesis; L-leucine biosynthesis; L-leucine from 3-methyl-2-oxobutanoate: step 2/4. Functionally, catalyzes the isomerization between 2-isopropylmalate and 3-isopropylmalate, via the formation of 2-isopropylmaleate. The protein is 3-isopropylmalate dehydratase large subunit of Brucella anthropi (strain ATCC 49188 / DSM 6882 / CCUG 24695 / JCM 21032 / LMG 3331 / NBRC 15819 / NCTC 12168 / Alc 37) (Ochrobactrum anthropi).